Consider the following 331-residue polypeptide: HTH-type transcriptional regulator RipA (331 aa).

The HTH araC/xylS-type domain occupies 112–209; it reads RAVAQVLVSN…GATPSTFTTG (98 aa). 2 DNA-binding regions (H-T-H motif) span residues 129-150 and 176-199; these read EEFA…LKST and ISVV…RRHT.

Functionally, under iron limitation, RipA negatively controls the expression of the acn (aconitase), catA (catechol 1,2 dioxygenase), leuCD (isopropylmalate dehydratase), narKGHJI (nitrite/nitrate transporter and nitrate reductase), sdhCAB (succinate dehydrogenase), pta (phosphotransacetylase) and katA (catalase) genes. Binds to the consensus sequence in the promoter region. In Corynebacterium glutamicum (strain ATCC 13032 / DSM 20300 / JCM 1318 / BCRC 11384 / CCUG 27702 / LMG 3730 / NBRC 12168 / NCIMB 10025 / NRRL B-2784 / 534), this protein is HTH-type transcriptional regulator RipA.